Consider the following 201-residue polypeptide: Ribonuclease HII (201 aa).

The 190-residue stretch at 12–201 (GIVCGIDEVG…FAPVAQYMLF (190 aa)) folds into the RNase H type-2 domain. A divalent metal cation contacts are provided by Asp18, Glu19, and Asp113.

Belongs to the RNase HII family. Mn(2+) is required as a cofactor. Requires Mg(2+) as cofactor.

Its subcellular location is the cytoplasm. The catalysed reaction is Endonucleolytic cleavage to 5'-phosphomonoester.. Its function is as follows. Endonuclease that specifically degrades the RNA of RNA-DNA hybrids. The polypeptide is Ribonuclease HII (rnhB) (Paramagnetospirillum magneticum (strain ATCC 700264 / AMB-1) (Magnetospirillum magneticum)).